Consider the following 156-residue polypeptide: Probable inactive ribonuclease-like protein 13 (156 aa).

An N-terminal signal peptide occupies residues 1–20 (MAPAVTRLLFLQLVLGPTLV). A glycan (N-linked (GlcNAc...) asparagine) is linked at Asn126.

This sequence belongs to the pancreatic ribonuclease family.

It is found in the secreted. Functionally, does not exhibit any ribonuclease activity. The protein is Probable inactive ribonuclease-like protein 13 (RNASE13) of Homo sapiens (Human).